The sequence spans 331 residues: Ketol-acid reductoisomerase (NADP(+)) (331 aa).

One can recognise a KARI N-terminal Rossmann domain in the interval 3-183 (AQMYYDDDAD…GGTRAGALKT (181 aa)). NADP(+) contacts are provided by residues 26-29 (YGSQ), Ser52, and Ser54. His109 is a catalytic residue. Gly135 contributes to the NADP(+) binding site. The KARI C-terminal knotted domain occupies 184 to 329 (TFKEETETDL…TELRSLMSWL (146 aa)). Mg(2+) contacts are provided by Asp192, Glu196, Glu228, and Glu232. Residue Ser253 coordinates substrate.

It belongs to the ketol-acid reductoisomerase family. Mg(2+) is required as a cofactor.

It catalyses the reaction (2R)-2,3-dihydroxy-3-methylbutanoate + NADP(+) = (2S)-2-acetolactate + NADPH + H(+). The catalysed reaction is (2R,3R)-2,3-dihydroxy-3-methylpentanoate + NADP(+) = (S)-2-ethyl-2-hydroxy-3-oxobutanoate + NADPH + H(+). Its pathway is amino-acid biosynthesis; L-isoleucine biosynthesis; L-isoleucine from 2-oxobutanoate: step 2/4. It functions in the pathway amino-acid biosynthesis; L-valine biosynthesis; L-valine from pyruvate: step 2/4. Functionally, involved in the biosynthesis of branched-chain amino acids (BCAA). Catalyzes an alkyl-migration followed by a ketol-acid reduction of (S)-2-acetolactate (S2AL) to yield (R)-2,3-dihydroxy-isovalerate. In the isomerase reaction, S2AL is rearranged via a Mg-dependent methyl migration to produce 3-hydroxy-3-methyl-2-ketobutyrate (HMKB). In the reductase reaction, this 2-ketoacid undergoes a metal-dependent reduction by NADPH to yield (R)-2,3-dihydroxy-isovalerate. In Thermobifida fusca (strain YX), this protein is Ketol-acid reductoisomerase (NADP(+)).